Consider the following 284-residue polypeptide: MNKANDYTLGVEMIPLSMGEFFEEIDHIRDAIRQIEDNVGRIEMLHQQSLQEIDEANIAATTRHLEGYTSDTRRLQTSVQLAIRSLESQNMQLPPDNDTATRKTQTEAVKKKFMDQIRHFLQIEKTYRAQYEQRMRRQLEIANPRATEDDFQTAINEENGGQVFAQALLRSNRSGEARTALREVQERHADIKRIERTIAELAQLFQDMATMVQEQEPMVDKIVTDAVNVRTNMGEGTQHMDRAIKSARAARKKKWICFGICVVIICVIVAVLCGVLIPVLGNRH.

A coiled-coil region spans residues 23–57 (EEIDHIRDAIRQIEDNVGRIEMLHQQSLQEIDEAN). A t-SNARE coiled-coil homology domain is found at 181–243 (LREVQERHAD…GEGTQHMDRA (63 aa)). The chain crosses the membrane as a helical; Anchor for type IV membrane protein span at residues 260 to 280 (ICVVIICVIVAVLCGVLIPVL).

It belongs to the syntaxin family.

The protein localises to the cell membrane. It localises to the prospore membrane. This Schizosaccharomyces pombe (strain 972 / ATCC 24843) (Fission yeast) protein is Syntaxin-like protein psy1 (psy1).